The following is a 366-amino-acid chain: tRNA/tmRNA (uracil-C(5))-methyltransferase (366 aa).

Residues glutamine 190, tyrosine 218, asparagine 223, glutamate 239, and aspartate 299 each coordinate S-adenosyl-L-methionine. Residue cysteine 324 is the Nucleophile of the active site. The active-site Proton acceptor is glutamate 358.

It belongs to the class I-like SAM-binding methyltransferase superfamily. RNA M5U methyltransferase family. TrmA subfamily.

It carries out the reaction uridine(54) in tRNA + S-adenosyl-L-methionine = 5-methyluridine(54) in tRNA + S-adenosyl-L-homocysteine + H(+). The enzyme catalyses uridine(341) in tmRNA + S-adenosyl-L-methionine = 5-methyluridine(341) in tmRNA + S-adenosyl-L-homocysteine + H(+). Functionally, dual-specificity methyltransferase that catalyzes the formation of 5-methyluridine at position 54 (m5U54) in all tRNAs, and that of position 341 (m5U341) in tmRNA (transfer-mRNA). In Escherichia coli O81 (strain ED1a), this protein is tRNA/tmRNA (uracil-C(5))-methyltransferase.